Reading from the N-terminus, the 398-residue chain is Candidapepsin-2 (398 aa).

The signal sequence occupies residues 1–18 (MFLKNIFIGLAIALLVDA). Residues 19–56 (TPTTTKRSAGFVALDFSVVKTPKAFPVTNGQEGKTSKR) constitute a propeptide, activation peptide. A Peptidase A1 domain is found at 70-384 (YAADITVGSN…DLDNNEISLA (315 aa)). Asp88 is a catalytic residue. Pepstatin A is bound at residue 88 to 90 (DTG). Cys103 and Cys115 are oxidised to a cystine. Residues 141–142 (GD) and 274–278 (DSGTT) contribute to the pepstatin A site. Asp274 is a catalytic residue. The cysteines at positions 312 and 350 are disulfide-linked. N-linked (GlcNAc...) asparagine glycosylation is found at Asn313 and Asn321.

It belongs to the peptidase A1 family. In terms of assembly, monomer. In terms of processing, O-glycosylated.

Its subcellular location is the secreted. The catalysed reaction is Preferential cleavage at the carboxyl of hydrophobic amino acids, but fails to cleave 15-Leu-|-Tyr-16, 16-Tyr-|-Leu-17 and 24-Phe-|-Phe-25 of insulin B chain. Activates trypsinogen, and degrades keratin.. This chain is Candidapepsin-2 (SAP2), found in Candida albicans (strain WO-1) (Yeast).